A 288-amino-acid polypeptide reads, in one-letter code: Light-independent protochlorophyllide reductase iron-sulfur ATP-binding protein (288 aa).

ATP is bound by residues 10-15 and Lys39; that span reads GIGKST. Mg(2+) is bound at residue Ser14. The [4Fe-4S] cluster site is built by Cys95 and Cys129. Residues 180–181 and 204–206 each bind ATP; these read NR and PLL.

The protein belongs to the NifH/BchL/ChlL family. As to quaternary structure, homodimer. Protochlorophyllide reductase is composed of three subunits; ChlL, ChlN and ChlB. Requires [4Fe-4S] cluster as cofactor.

Its subcellular location is the plastid. It is found in the chloroplast. The enzyme catalyses chlorophyllide a + oxidized 2[4Fe-4S]-[ferredoxin] + 2 ADP + 2 phosphate = protochlorophyllide a + reduced 2[4Fe-4S]-[ferredoxin] + 2 ATP + 2 H2O. The protein operates within porphyrin-containing compound metabolism; chlorophyll biosynthesis (light-independent). In terms of biological role, component of the dark-operative protochlorophyllide reductase (DPOR) that uses Mg-ATP and reduced ferredoxin to reduce ring D of protochlorophyllide (Pchlide) to form chlorophyllide a (Chlide). This reaction is light-independent. The L component serves as a unique electron donor to the NB-component of the complex, and binds Mg-ATP. The polypeptide is Light-independent protochlorophyllide reductase iron-sulfur ATP-binding protein (Stigeoclonium helveticum (Green alga)).